A 421-amino-acid chain; its full sequence is Structure-specific endonuclease subunit SLX1 (421 aa).

Residues 13–95 (AFYCCYLLRS…QHTKESRHAE (83 aa)) enclose the GIY-YIG domain. Disordered stretches follow at residues 34–57 (TPEP…KTSS) and 96–120 (VERC…KRAG). The segment at 225–280 (CGVCKQRLNPRNDMIAICSHSLCRCASHLLCLSAHFLEAAGFIGKLIPKEGTCPAC) adopts an SLX1-type zinc-finger fold. A compositionally biased stretch (basic residues) spans 310 to 322 (RRRTEQVGKRKIS). The disordered stretch occupies residues 310 to 339 (RRRTEQVGKRKISNHVSSEKGESEASMPST).

Belongs to the SLX1 family. Forms a heterodimer with SLX4. It depends on a divalent metal cation as a cofactor.

The protein resides in the nucleus. Catalytic subunit of the SLX1-SLX4 structure-specific endonuclease that resolves DNA secondary structures generated during DNA repair and recombination. Has endonuclease activity towards branched DNA substrates, introducing single-strand cuts in duplex DNA close to junctions with ss-DNA. The chain is Structure-specific endonuclease subunit SLX1 from Ajellomyces capsulatus (strain G186AR / H82 / ATCC MYA-2454 / RMSCC 2432) (Darling's disease fungus).